Reading from the N-terminus, the 100-residue chain is Urease subunit gamma (100 aa).

It belongs to the urease gamma subunit family. Heterotrimer of UreA (gamma), UreB (beta) and UreC (alpha) subunits. Three heterotrimers associate to form the active enzyme.

It localises to the cytoplasm. It catalyses the reaction urea + 2 H2O + H(+) = hydrogencarbonate + 2 NH4(+). It participates in nitrogen metabolism; urea degradation; CO(2) and NH(3) from urea (urease route): step 1/1. In Trichormus variabilis (strain ATCC 29413 / PCC 7937) (Anabaena variabilis), this protein is Urease subunit gamma.